The chain runs to 323 residues: Beta-ketoacyl-[acyl-carrier-protein] synthase III (323 aa).

Active-site residues include Cys113 and His250. Residues 251–255 (QANKR) are ACP-binding. Asn280 is an active-site residue.

It belongs to the thiolase-like superfamily. FabH family. In terms of assembly, homodimer.

It localises to the cytoplasm. The catalysed reaction is malonyl-[ACP] + acetyl-CoA + H(+) = 3-oxobutanoyl-[ACP] + CO2 + CoA. The protein operates within lipid metabolism; fatty acid biosynthesis. Its function is as follows. Catalyzes the condensation reaction of fatty acid synthesis by the addition to an acyl acceptor of two carbons from malonyl-ACP. Catalyzes the first condensation reaction which initiates fatty acid synthesis and may therefore play a role in governing the total rate of fatty acid production. Possesses both acetoacetyl-ACP synthase and acetyl transacylase activities. Its substrate specificity determines the biosynthesis of branched-chain and/or straight-chain of fatty acids. The chain is Beta-ketoacyl-[acyl-carrier-protein] synthase III from Brucella suis (strain ATCC 23445 / NCTC 10510).